Consider the following 241-residue polypeptide: Ribonuclease 3 (241 aa).

The RNase III domain occupies 8–137 (LTLLKNRLGI…LLGAVYLDQG (130 aa)). Mg(2+) is bound at residue E50. Residue D54 is part of the active site. Residues D123 and E126 each coordinate Mg(2+). Residue E126 is part of the active site. Residues 164–233 (DYKTELQELV…AKKALMKSDL (70 aa)) form the DRBM domain. The segment at 214–241 (RSKKEAEQQAAKKALMKSDLGSACNHKK) is disordered.

Belongs to the ribonuclease III family. Homodimer. Requires Mg(2+) as cofactor.

It is found in the cytoplasm. It carries out the reaction Endonucleolytic cleavage to 5'-phosphomonoester.. Digests double-stranded RNA. Involved in the processing of primary rRNA transcript to yield the immediate precursors to the large and small rRNAs (23S and 16S). Processes some mRNAs, and tRNAs when they are encoded in the rRNA operon. Processes pre-crRNA and tracrRNA of type II CRISPR loci if present in the organism. This chain is Ribonuclease 3, found in Pelotomaculum thermopropionicum (strain DSM 13744 / JCM 10971 / SI).